The following is a 41-amino-acid chain: Photosystem I reaction center subunit IX (41 aa).

Residues 7-27 traverse the membrane as a helical segment; sequence YLSVAPVLSTLWFGALAGLLI.

This sequence belongs to the PsaJ family.

The protein localises to the plastid. Its subcellular location is the chloroplast thylakoid membrane. Functionally, may help in the organization of the PsaE and PsaF subunits. The sequence is that of Photosystem I reaction center subunit IX from Jasminum nudiflorum (Winter jasmine).